Consider the following 227-residue polypeptide: NADH-quinone oxidoreductase subunit C (227 aa).

This sequence belongs to the complex I 30 kDa subunit family. In terms of assembly, NDH-1 is composed of 14 different subunits. Subunits NuoB, C, D, E, F, and G constitute the peripheral sector of the complex.

The protein localises to the cell inner membrane. The enzyme catalyses a quinone + NADH + 5 H(+)(in) = a quinol + NAD(+) + 4 H(+)(out). NDH-1 shuttles electrons from NADH, via FMN and iron-sulfur (Fe-S) centers, to quinones in the respiratory chain. The immediate electron acceptor for the enzyme in this species is believed to be ubiquinone. Couples the redox reaction to proton translocation (for every two electrons transferred, four hydrogen ions are translocated across the cytoplasmic membrane), and thus conserves the redox energy in a proton gradient. This is NADH-quinone oxidoreductase subunit C from Legionella pneumophila (strain Paris).